Reading from the N-terminus, the 86-residue chain is Small ribosomal subunit protein bS16 (86 aa).

It belongs to the bacterial ribosomal protein bS16 family.

This chain is Small ribosomal subunit protein bS16, found in Methylibium petroleiphilum (strain ATCC BAA-1232 / LMG 22953 / PM1).